We begin with the raw amino-acid sequence, 126 residues long: Interleukin-18-binding protein (126 aa).

The N-terminal stretch at 1–20 (MRILFLIAFMYGCVHPYVNA) is a signal peptide.

This sequence belongs to the orthopoxvirus OPG022 family.

The protein resides in the secreted. Its function is as follows. Soluble IL18-binding protein that may modulate the host antiviral response. The protein is Interleukin-18-binding protein (OPG022) of Bos taurus (Bovine).